A 238-amino-acid chain; its full sequence is Small ribosomal subunit protein uS2 (238 aa).

This sequence belongs to the universal ribosomal protein uS2 family.

The protein is Small ribosomal subunit protein uS2 of Synechococcus sp. (strain CC9605).